Here is a 311-residue protein sequence, read N- to C-terminus: Alpha/beta hydrolase domain-containing protein 17C (311 aa).

Positions 48-67 (EAPASTAQQPPREEGSGEPA) are disordered. Residues serine 193, aspartate 258, and histidine 287 each act as charge relay system in the active site.

It belongs to the AB hydrolase superfamily. ABHD17 family. In terms of processing, palmitoylated on cysteine residues located in a cysteine cluster at the N-terminus which promotes membrane localization.

The protein resides in the recycling endosome membrane. Its subcellular location is the cell projection. It is found in the dendritic spine. It localises to the postsynaptic density membrane. It catalyses the reaction S-hexadecanoyl-L-cysteinyl-[protein] + H2O = L-cysteinyl-[protein] + hexadecanoate + H(+). Functionally, hydrolyzes fatty acids from S-acylated cysteine residues in proteins. Has depalmitoylating activity towards NRAS. The polypeptide is Alpha/beta hydrolase domain-containing protein 17C (Xenopus laevis (African clawed frog)).